A 126-amino-acid chain; its full sequence is Large-conductance mechanosensitive channel (126 aa).

Helical transmembrane passes span 8–28 and 70–90; these read FAMR…AAFT and IQQI…VKVI.

The protein belongs to the MscL family. In terms of assembly, homopentamer.

It localises to the cell membrane. Its function is as follows. Channel that opens in response to stretch forces in the membrane lipid bilayer. May participate in the regulation of osmotic pressure changes within the cell. This chain is Large-conductance mechanosensitive channel, found in Exiguobacterium sp. (strain ATCC BAA-1283 / AT1b).